A 283-amino-acid polypeptide reads, in one-letter code: Accumulation of dyads protein 2 (283 aa).

The segment at 1–41 (MSDKEQTSGNTDLENAPAGYYSSHDNDVNGVAEDERPSHDS) is disordered. At 1–89 (MSDKEQTSGN…APAPVHKFAN (89 aa)) the chain is on the cytoplasmic side. The chain crosses the membrane as a helical span at residues 90–110 (PAPLGLSAFALTTFVLSMFNA). Residues 111–120 (RAQGITVPNV) lie on the Extracellular side of the membrane. The chain crosses the membrane as a helical span at residues 121 to 141 (VVGCAMFYGGLVQLIAGIWEI). Residues 142–151 (ALENTFGGTA) lie on the Cytoplasmic side of the membrane. The chain crosses the membrane as a helical span at residues 152–172 (LCSYGGFWLSFAAIYIPWFGI). The Extracellular portion of the chain corresponds to 173–185 (LEAYEDNESDLNN). Residues 186–206 (ALGFYLLGWAIFTFGLTVCTM) form a helical membrane-spanning segment. The Cytoplasmic portion of the chain corresponds to 207–208 (KS). Residues 209-229 (TVMFFLLFFLLALTFLLLSIG) form a helical membrane-spanning segment. Residues 230 to 240 (HFANRLGVTRA) lie on the Extracellular side of the membrane. The helical transmembrane segment at 241–261 (GGVLGVVVAFIAWYNAYAGVA) threads the bilayer. Residues 262-283 (TKQNSYVLARPFPLPSTERVIF) are Cytoplasmic-facing.

The protein belongs to the acetate uptake transporter (AceTr) (TC 2.A.96) family.

It is found in the cell membrane. The protein resides in the vacuole membrane. In terms of biological role, transporter protein required for ammonia export and acetate uptake and resistance. Necessary for up-regulation and down-regulation of meiotic plaque (MP) component levels in a dependency on external acetate. Has a role in ascus formation. The polypeptide is Accumulation of dyads protein 2 (ADY2) (Saccharomyces cerevisiae (strain ATCC 204508 / S288c) (Baker's yeast)).